A 215-amino-acid polypeptide reads, in one-letter code: 3-isopropylmalate dehydratase small subunit (215 aa).

It belongs to the LeuD family. LeuD type 1 subfamily. As to quaternary structure, heterodimer of LeuC and LeuD.

The enzyme catalyses (2R,3S)-3-isopropylmalate = (2S)-2-isopropylmalate. It functions in the pathway amino-acid biosynthesis; L-leucine biosynthesis; L-leucine from 3-methyl-2-oxobutanoate: step 2/4. Its function is as follows. Catalyzes the isomerization between 2-isopropylmalate and 3-isopropylmalate, via the formation of 2-isopropylmaleate. In Chromohalobacter salexigens (strain ATCC BAA-138 / DSM 3043 / CIP 106854 / NCIMB 13768 / 1H11), this protein is 3-isopropylmalate dehydratase small subunit.